Here is a 587-residue protein sequence, read N- to C-terminus: Putative gustatory receptor 59b (587 aa).

Residues 1 to 4 lie on the Cytoplasmic side of the membrane; that stretch reads MPSY. The chain crosses the membrane as a helical span at residues 5–25; sequence MAFTPYIMFSTNYAAIAYILI. Residues 26–62 are Extracellular-facing; that stretch reads SRCYRDSMLLDLQRITLEVNREMLRTGKKMNSLIRRM. The helical transmembrane segment at 63–83 threads the bilayer; the sequence is FFLKTFTLTYSCLSYILAVLV. The Cytoplasmic segment spans residues 84–97; it reads YQWRAQNWSNLFNG. Residues 98–118 traverse the membrane as a helical segment; sequence LLVNISLTILVVTTFFYFVSL. The Extracellular segment spans residues 119–277; sequence MHVARGFDFV…CGLYPVNKAK (159 aa). Residue asparagine 159 is glycosylated (N-linked (GlcNAc...) asparagine). A helical membrane pass occupies residues 278-298; sequence WLEMVASIVVHSIMLFQFHLV. At 299–309 the chain is on the cytoplasmic side; it reads MRGGYTTLFSR. A helical transmembrane segment spans residues 310-330; that stretch reads TYALLANIITLTMLPIVMWQV. Over 331–403 the chain is Extracellular; it reads RSVFLAKRHY…GIDGVRRSLR (73 aa). A helical transmembrane segment spans residues 404–424; sequence ILLFVKFFTLSWLCITDIIFL. Residues 425 to 518 are Cytoplasmic-facing; the sequence is FYSSDAVIWV…IYAPQMLATR (94 aa). A helical transmembrane segment spans residues 519–539; the sequence is FDHFVIGVIQAYWGAVFTFDL. Residues 540–587 lie on the Extracellular side of the membrane; that stretch reads STSFLWVVYGSVQYHVRSLDYYLIDYMCDVAVEYHDSARHSWSEKECY.

This sequence belongs to the insect chemoreceptor superfamily. Gustatory receptor (GR) family. Gr22e subfamily.

It localises to the cell membrane. Probable gustatory receptor which mediates acceptance or avoidance behavior, depending on its substrates. In Drosophila erecta (Fruit fly), this protein is Putative gustatory receptor 59b.